The primary structure comprises 345 residues: Myb/SANT-like DNA-binding domain-containing protein 4 (345 aa).

In terms of domain architecture, Myb-like spans 4–77 (LKRKRKSNFS…EVKRRYLDWR (74 aa)). Residue Lys9 forms a Glycyl lysine isopeptide (Lys-Gly) (interchain with G-Cter in SUMO2) linkage. Residue Ser106 is modified to Phosphoserine. Glycyl lysine isopeptide (Lys-Gly) (interchain with G-Cter in SUMO2) cross-links involve residues Lys114 and Lys142. The disordered stretch occupies residues 143-175 (VEEEERDPQSPEFEIEEEEEMLSSVIPDSRREN). Thr188 bears the Phosphothreonine mark. A coiled-coil region spans residues 203 to 345 (LLVNIEKQKL…LRIQKEGHLQ (143 aa)). Glycyl lysine isopeptide (Lys-Gly) (interchain with G-Cter in SUMO2) cross-links involve residues Lys237, Lys254, and Lys273.

The chain is Myb/SANT-like DNA-binding domain-containing protein 4 (MSANTD4) from Homo sapiens (Human).